A 708-amino-acid polypeptide reads, in one-letter code: O-antigen chain terminator bifunctional methyltransferase/kinase WbdD (708 aa).

A methyltransferase region spans residues 1–210 (MTKDLNTLVS…VPRPMYLVSN (210 aa)). Residues 16 to 17 (YQ), Arg-36, Gly-61, 82 to 87 (DFQQEN), 108 to 111 (GRIE), and Leu-128 each bind S-adenosyl-L-methionine. The segment at 211–459 (HRVLINDFNQ…AKLPSAEQQR (249 aa)) is kinase. Residues Pro-229, His-237, 241 to 243 (RRY), Lys-252, Glu-274, 309 to 311 (EKL), Met-358, and Asp-369 each bind ATP. The stretch at 485–594 (AGSEALRGQI…EIEKIHRSRS (110 aa)) forms a coiled coil. A required for membrane-binding region spans residues 601-669 (YRYLGLQIHL…RLYRRMNPLP (69 aa)). The tract at residues 687 to 708 (VMHPELLPPEVYEIYLKLTKNK) is required for localizing WbdA to the membrane.

The protein belongs to the WbdD family. In terms of assembly, homotrimer in solution. Interacts with WbdA.

The protein localises to the cell inner membrane. It carries out the reaction 3-O-phospho-alpha-D-Man-(1-&gt;2)-alpha-D-Man-(1-&gt;2)-[alpha-D-Man-(1-&gt;3)-alpha-D-Man-(1-&gt;3)-alpha-D-Man-(1-&gt;2)-alpha-D-Man-(1-&gt;2)](n)-alpha-D-Man-(1-&gt;3)-alpha-D-Man-(1-&gt;3)-alpha-D-Man-(1-&gt;3)-alpha-D-GlcNAc-di-trans,octa-cis-undecaprenyl diphosphate + S-adenosyl-L-methionine = 3-O-methylphospho-alpha-D-Man-(1-&gt;2)-alpha-D-Man-(1-&gt;2)-[alpha-D-Man-(1-&gt;3)-alpha-D-Man-(1-&gt;3)-alpha-D-Man-(1-&gt;2)-alpha-D-Man-(1-&gt;2)](n)-alpha-D-Man-(1-&gt;3)-alpha-D-Man-(1-&gt;3)-alpha-D-Man-(1-&gt;3)-alpha-D-GlcNAc-di-trans,octa-cis-undecaprenyl diphosphate + S-adenosyl-L-homocysteine. The enzyme catalyses alpha-D-Man-(1-&gt;2)-alpha-D-Man-(1-&gt;2)-[alpha-D-Man-(1-&gt;3)-alpha-D-Man-(1-&gt;3)-alpha-D-Man-(1-&gt;2)-alpha-D-Man-(1-&gt;2)](n)-alpha-D-Man-(1-&gt;3)-alpha-D-Man-(1-&gt;3)-alpha-D-Man-(1-&gt;3)-alpha-D-GlcNAc-di-trans,octa-cis-undecaprenyl diphosphate + ATP = 3-O-phospho-alpha-D-Man-(1-&gt;2)-alpha-D-Man-(1-&gt;2)-[alpha-D-Man-(1-&gt;3)-alpha-D-Man-(1-&gt;3)-alpha-D-Man-(1-&gt;2)-alpha-D-Man-(1-&gt;2)](n)-alpha-D-Man-(1-&gt;3)-alpha-D-Man-(1-&gt;3)-alpha-D-Man-(1-&gt;3)-alpha-D-GlcNAc-di-trans,octa-cis-undecaprenyl diphosphate + ADP + H(+). Its pathway is bacterial outer membrane biogenesis; LPS O-antigen biosynthesis. Its function is as follows. Regulates the length of the LPS O-antigen polysaccharide chain. Stops the polymerization of the chain by phosphorylating and then methylating the phosphate on the terminal sugar. This terminal modification is essential for export of the O-antigen across the inner membrane. WbdD is also required for correct localization of the WbdA mannosyltransferase. This Escherichia coli protein is O-antigen chain terminator bifunctional methyltransferase/kinase WbdD.